The sequence spans 272 residues: Shikimate dehydrogenase (NADP(+)) (272 aa).

Residues 14–16 (SKS) and T61 each bind shikimate. K65 (proton acceptor) is an active-site residue. E77 contacts NADP(+). Shikimate-binding residues include N86 and D102. NADP(+) contacts are provided by residues 126–130 (GAGGA), 149–154 (NRTVSR), and M213. Residue Y215 participates in shikimate binding. An NADP(+)-binding site is contributed by G237.

This sequence belongs to the shikimate dehydrogenase family. In terms of assembly, homodimer.

The catalysed reaction is shikimate + NADP(+) = 3-dehydroshikimate + NADPH + H(+). It functions in the pathway metabolic intermediate biosynthesis; chorismate biosynthesis; chorismate from D-erythrose 4-phosphate and phosphoenolpyruvate: step 4/7. In terms of biological role, involved in the biosynthesis of the chorismate, which leads to the biosynthesis of aromatic amino acids. Catalyzes the reversible NADPH linked reduction of 3-dehydroshikimate (DHSA) to yield shikimate (SA). This Shigella boydii serotype 4 (strain Sb227) protein is Shikimate dehydrogenase (NADP(+)).